Here is a 537-residue protein sequence, read N- to C-terminus: Bifunctional purine biosynthesis protein PurH (537 aa).

The region spanning 8 to 158 (IPAPDLVPVR…KNHAYVAVVT (151 aa)) is the MGS-like domain.

Belongs to the PurH family.

It carries out the reaction (6R)-10-formyltetrahydrofolate + 5-amino-1-(5-phospho-beta-D-ribosyl)imidazole-4-carboxamide = 5-formamido-1-(5-phospho-D-ribosyl)imidazole-4-carboxamide + (6S)-5,6,7,8-tetrahydrofolate. The enzyme catalyses IMP + H2O = 5-formamido-1-(5-phospho-D-ribosyl)imidazole-4-carboxamide. It functions in the pathway purine metabolism; IMP biosynthesis via de novo pathway; 5-formamido-1-(5-phospho-D-ribosyl)imidazole-4-carboxamide from 5-amino-1-(5-phospho-D-ribosyl)imidazole-4-carboxamide (10-formyl THF route): step 1/1. It participates in purine metabolism; IMP biosynthesis via de novo pathway; IMP from 5-formamido-1-(5-phospho-D-ribosyl)imidazole-4-carboxamide: step 1/1. The protein is Bifunctional purine biosynthesis protein PurH of Chelativorans sp. (strain BNC1).